The primary structure comprises 155 residues: MGKSILLINGPNLNLLGTREPHVYGHTTLSDVESNSREIAASHGAVLESFQSNHEGAIVDRIQAARGKVDGIIINPGAYTHTSVAIRDALLSVDVPFIELHVSNVHAREPWRHHSYFSDKAAGIIVGLGVYGYKVAVEHVCVNFEEKEKGAKAAL.

The active-site Proton acceptor is the tyrosine 24. 3 residues coordinate substrate: asparagine 75, histidine 81, and aspartate 88. Histidine 101 acts as the Proton donor in catalysis. Residues 102 to 103 (VS) and arginine 112 contribute to the substrate site.

Belongs to the type-II 3-dehydroquinase family. In terms of assembly, homododecamer. Adopts a ring-like structure, composed of an arrangement of two hexameric rings stacked on top of one another.

The enzyme catalyses 3-dehydroquinate = 3-dehydroshikimate + H2O. Its pathway is aromatic compound metabolism; 3,4-dihydroxybenzoate biosynthesis; 3,4-dihydroxybenzoate from 3-dehydroquinate: step 1/2. Functionally, is involved in the catabolism of quinate. Allows the utilization of quinate as carbon source via the beta-ketoadipate pathway. This chain is Catabolic 3-dehydroquinase, found in Penicillium rubens (strain ATCC 28089 / DSM 1075 / NRRL 1951 / Wisconsin 54-1255) (Penicillium chrysogenum).